The following is a 641-amino-acid chain: Epstein-Barr nuclear antigen 1 (641 aa).

A compositionally biased stretch (gly residues) spans 1–14; sequence MSDEGPGTGPGNGL. Disordered regions lie at residues 1–124 and 168–478; these read MSDE…AGGA and GAGA…NPKF. Residues 41–50 are compositionally biased toward basic residues; that stretch reads RGRGRGRGRG. Composition is skewed to gly residues over residues 51–62, 84–124, and 168–352; these read GGRPGAPGGSGS, GAHG…AGGA, and GAGA…GSGG. The interval 325–376 is interaction with host C1QBP/P32; that stretch reads GGGGRGRGGSGGRGRGGSGGRGRGGSGGRRGRGRERARGRSRERARGRGRGR. The tract at residues 328 to 378 is chromosome-tethering GR2; sequence GRGRGGSGGRGRGGSGGRGRGGSGGRRGRGRERARGRSRERARGRGRGRGE. Over residues 358–381 the composition is skewed to basic and acidic residues; it reads RERARGRSRERARGRGRGRGEKRP. Residues 379–386 form a nuclear localization signal region; that stretch reads KRPRSPSS. A compositionally biased stretch (low complexity) spans 383 to 394; it reads SPSSQSSSSGSP. A phosphoserine mark is found at Ser385 and Ser393. Positions 387 to 395 are interaction with host CSNK2B; it reads QSSSSGSPP. An interaction with host USP7 region spans residues 436–450; that stretch reads QGPTDDPGEGPSTGP. Residues 452 to 607 form a DBD/DD region; sequence GQGDGGRRKK…CSFDDGVDLP (156 aa). The segment covering 458-470 has biased composition (basic residues); sequence RRKKGGWFGKHRG. Lys460, Lys461, and Tyr518 together coordinate DNA. Catalysis depends on Tyr518, which acts as the For site-specific DNA cleavage activity. The disordered stretch occupies residues 612-641; that stretch reads PMVEGAAAEGDDGDDGDEGGDGDEGEEGQE. A compositionally biased stretch (acidic residues) spans 620–641; the sequence is EGDDGDDGDEGGDGDEGEEGQE.

This sequence belongs to the herpesviridae EBNA1 family. Homodimer. Dimers can assemble into higher-order oligomers like a homohexamer. Binding to the DS element involves 2 dimers of EBNA1. Interacts with human USP7; this interaction is independent and simultaneous to EBNA1 interaction with CSNK2B as well as necessary for PML nuclear bodies disruption by EBNA1. Interacts with host CSNK2B (via KSSR motif); the interaction requires phosphorylation of EBNA1, is independent and simultaneous to EBNA1 interaction with USP7 as well as necessary for PML nuclear bodies disruption by EBNA1. EBNA1, USP7 and CSNK2B form a ternary complex. EBNA1, USP7 and CSNK2B form a ternary complex. Interacts with human EBP2; it is not clear if this interaction is linked with the ability of EBNA1 to associate with host mitotic chromosomes. Interacts with BGLF4; this interaction facilitates the switch from latent to lytic DNA replication by down-regulating EBNA1 replication function. Interacts with human PAX5; this interaction promotes EBNA1-dependent transcription. Interacts with host KPNA1/Importin subunit alpha-5; this interaction allows the nuclear import of EBNA1. Interacts with host KPNA2/Importin subunit alpha-1; this interaction allows the nuclear import of EBNA1. Interacts with host C1QBP/P32. Interacts with host BIRC5/Survivin; this interaction is probably important for EBV episome maintenance in Burkitt's lymphoma host cells. In terms of processing, phosphorylation at Ser-385 increases the nuclear import efficiency of EBNA1. Phosphorylation at Ser-393 is required for interaction with CSNK2B.

It is found in the host nucleus. In terms of biological role, responsible for the origin of replication (oriP) dependent replication and maintenance of viral episomes during latent infection. EBNA1 dimer interacts with the DS (dyad symmetry) element within the origin of replication oriP and with a host mitotic chromosome to initiate viral DNA replication during latency. EBNA1 binding to DS recruits the host origin recognition complex (ORC). Governs the faithful mitotic segregation of the viral episomes by binding both the FR (family of repeats) element within oriP and the host mitotic chromosomes. Forms a cell cycle-dependent tyrosine-dependent DNA cross-link and single-strand cleavage at oriP required for terminating replication and maintaining viral episomes. Counteracts the stabilization of host p53/TP53 by host USP7, thereby decreasing apoptosis and increasing host cell survival. Induces degradation of host PML through the ubiquitin-proteasome system, which promotes lytic reactivation and may impair the host cell DNA repair. Increases the association of CK2 with PML proteins which increases the phosphorylation of PML proteins by CK2, triggering the polyubiquitylation and degradation of PML. Displays inhibitory effects on a SUMO2-modified complex that includes STUB1, KAP1 and USP7. This inhibitory effect possibly participates to the maintenance of latency linked to PML silencing. The protein is Epstein-Barr nuclear antigen 1 (EBNA1) of Epstein-Barr virus (strain GD1) (HHV-4).